We begin with the raw amino-acid sequence, 424 residues long: Transcription regulator spe-44 (424 aa).

The 86-residue stretch at 65 to 150 (PLQITIPEGD…RTHMEAMTID (86 aa)) folds into the SAND domain. Disordered regions lie at residues 178-228 (ARKS…KPRQ) and 371-394 (EHSV…AREF). Positions 192–210 (YEIENEMAGKEADNDDNRK) are enriched in basic and acidic residues. Over residues 378–388 (PRTSSSSQESL) the composition is skewed to polar residues.

It is found in the chromosome. It localises to the nucleus. Functionally, transcription factor which controls spermatogenesis and sperm cell fate by regulation of sperm gene expression. The protein is Transcription regulator spe-44 of Caenorhabditis elegans.